Here is a 276-residue protein sequence, read N- to C-terminus: Transmembrane protein 45B (276 aa).

6 helical membrane passes run 7-27 (HALP…KYPL), 48-68 (IIEA…EQFV), 95-115 (LFFA…HVPL), 147-167 (IHSL…VEVV), 181-201 (LLLL…PPFG), and 213-233 (IMFV…ILAA). A phosphoserine mark is found at Ser-271 and Ser-273.

This sequence belongs to the TMEM45 family.

The protein resides in the endosome membrane. The protein localises to the lysosome membrane. Its subcellular location is the golgi apparatus. It is found in the trans-Golgi network membrane. In terms of biological role, plays a role in innate immunity. In Bos taurus (Bovine), this protein is Transmembrane protein 45B (TMEM45B).